The sequence spans 308 residues: Low density lipoprotein receptor adapter protein 1 (308 aa).

Met1 carries the N-acetylmethionine modification. Ser14 carries the phosphoserine modification. The region spanning 41–195 (LLEGMVFSLK…QEGGDVPGTR (155 aa)) is the PID domain. The tract at residues 179-201 (EKREKANQEGGDVPGTRRDSTPS) is disordered. Phosphoserine occurs at positions 198 and 201. Residues 211–215 (LLDLE) carry the Clathrin box motif. Positions 248-275 (WELDDGLDEAFSRLAQSRTNPQVLDTGL) are AP-2 complex binding. The short motif at 256-265 (EAFSRLAQSR) is the [DE]-X(1,2)-F-X-X-[FL]-X-X-X-R motif element. Residues 288 to 308 (PTDWDKPDSSGIDQDDDVFTF) form a disordered region.

As to quaternary structure, interacts (via PID domain) with LDLR (via NPXY motif). Binds to soluble clathrin trimers. Interacts with AP2B1; the interaction mediates the association with the AP-2 complex. Interacts with VLDLR. Interacts with LRP2.

The protein resides in the cytoplasm. Functionally, adapter protein (clathrin-associated sorting protein (CLASP)) required for efficient endocytosis of the LDL receptor (LDLR) in polarized cells such as hepatocytes and lymphocytes, but not in non-polarized cells (fibroblasts). May be required for LDL binding and internalization but not for receptor clustering in coated pits. May facilitate the endocytosis of LDLR and LDLR-LDL complexes from coated pits by stabilizing the interaction between the receptor and the structural components of the pits. May also be involved in the internalization of other LDLR family members. Binds to phosphoinositides, which regulate clathrin bud assembly at the cell surface. Required for trafficking of LRP2 to the endocytic recycling compartment which is necessary for LRP2 proteolysis, releasing a tail fragment which translocates to the nucleus and mediates transcriptional repression. The chain is Low density lipoprotein receptor adapter protein 1 from Mus musculus (Mouse).